A 310-amino-acid polypeptide reads, in one-letter code: ADP-L-glycero-D-manno-heptose-6-epimerase (310 aa).

Residues 10–11 (FI), 31–32 (DN), Lys38, Lys53, 75–79 (EGACS), and Asn92 contribute to the NADP(+) site. The active-site Proton acceptor is Tyr140. Lys144 lines the NADP(+) pocket. Asn169 provides a ligand contact to substrate. Positions 170 and 178 each coordinate NADP(+). Lys178 acts as the Proton acceptor in catalysis. Substrate is bound by residues Ser180, His187, 201–204 (FEGS), and Arg209. Lys267 is subject to N6-acetyllysine. Position 272 (Tyr272) interacts with substrate.

It belongs to the NAD(P)-dependent epimerase/dehydratase family. HldD subfamily. Homopentamer. NADP(+) is required as a cofactor. It depends on NAD(+) as a cofactor.

It catalyses the reaction ADP-D-glycero-beta-D-manno-heptose = ADP-L-glycero-beta-D-manno-heptose. It participates in nucleotide-sugar biosynthesis; ADP-L-glycero-beta-D-manno-heptose biosynthesis; ADP-L-glycero-beta-D-manno-heptose from D-glycero-beta-D-manno-heptose 7-phosphate: step 4/4. The protein operates within bacterial outer membrane biogenesis; LPS core biosynthesis. Its activity is regulated as follows. Completely inhibited by ADP and ADP-glucose, and partially inhibited by ATP and NADH. Functionally, catalyzes the interconversion between ADP-D-glycero-beta-D-manno-heptose and ADP-L-glycero-beta-D-manno-heptose via an epimerization at carbon 6 of the heptose. The polypeptide is ADP-L-glycero-D-manno-heptose-6-epimerase (hldD) (Escherichia coli (strain K12)).